The chain runs to 308 residues: Cell division protein FtsQ (308 aa).

Topologically, residues 1–53 (MDSGGRIVYALNVEKTGFLRILSVTVLQRLYRRVFWFLFKCVAGIDVPRHAGS) are cytoplasmic. Residues 54–74 (LAVFSFFFLSILYSISSGGYM) traverse the membrane as a helical segment. The Periplasmic portion of the chain corresponds to 75-308 (NHFMKVAISN…LLKMLKAGSV (234 aa)). One can recognise a POTRA domain in the interval 87–155 (FLVTHVDMSG…DRLRISLVER (69 aa)).

The protein belongs to the FtsQ/DivIB family. FtsQ subfamily.

It localises to the cell inner membrane. Functionally, essential cell division protein. The polypeptide is Cell division protein FtsQ (Bartonella bacilliformis).